The following is a 470-amino-acid chain: ATP synthase subunit beta (470 aa).

G157–T164 is a binding site for ATP.

Belongs to the ATPase alpha/beta chains family. As to quaternary structure, F-type ATPases have 2 components, CF(1) - the catalytic core - and CF(0) - the membrane proton channel. CF(1) has five subunits: alpha(3), beta(3), gamma(1), delta(1), epsilon(1). CF(0) has three main subunits: a(1), b(2) and c(9-12). The alpha and beta chains form an alternating ring which encloses part of the gamma chain. CF(1) is attached to CF(0) by a central stalk formed by the gamma and epsilon chains, while a peripheral stalk is formed by the delta and b chains.

It is found in the cell inner membrane. The enzyme catalyses ATP + H2O + 4 H(+)(in) = ADP + phosphate + 5 H(+)(out). Produces ATP from ADP in the presence of a proton gradient across the membrane. The catalytic sites are hosted primarily by the beta subunits. The chain is ATP synthase subunit beta from Geobacter sp. (strain M21).